The sequence spans 1108 residues: Receptor-type guanylate cyclase gcy-20 (1108 aa).

An N-terminal signal peptide occupies residues 1–15 (MRILLLLLQNILVFC). Over 16–474 (QFLQTIKVGL…ECPADFVKEY (459 aa)) the chain is Extracellular. N66, N131, N319, N341, N366, and N380 each carry an N-linked (GlcNAc...) asparagine glycan. Residues 475–495 (LVYTIIAAFIVILALLAGCAG) traverse the membrane as a helical segment. A Protein kinase domain is found at 483-803 (FIVILALLAG…IEQVRSHLNG (321 aa)). Residues 489–497 (LLAGCAGLL) and K571 each bind ATP. Residues 496 to 1108 (LLYTMHMKRK…QAGDNNSETV (613 aa)) are Cytoplasmic-facing. Residues 876-1006 (TIFFSDVVQF…DAVNTASRME (131 aa)) form the Guanylate cyclase domain. Residues 1083–1108 (LEKNAEGSETSSLSVDQAGDNNSETV) form a disordered region. Residues 1089–1108 (GSETSSLSVDQAGDNNSETV) are compositionally biased toward polar residues.

This sequence belongs to the adenylyl cyclase class-4/guanylyl cyclase family. In terms of tissue distribution, expressed asymmetrically in ASE left (ASEL) sensory neuron. Expressed in excretory gland and canal cell.

The protein resides in the cell membrane. It catalyses the reaction GTP = 3',5'-cyclic GMP + diphosphate. In terms of biological role, guanylate cyclase involved in the production of the second messenger cGMP. The chain is Receptor-type guanylate cyclase gcy-20 from Caenorhabditis elegans.